The sequence spans 531 residues: Probable rhamnogalacturonate lyase A (531 aa).

Positions M1–A20 are cleaved as a signal peptide. Disulfide bonds link C50–C93 and C184–C193. N351 carries an N-linked (GlcNAc...) asparagine glycan.

Belongs to the polysaccharide lyase 4 family.

The protein localises to the secreted. The catalysed reaction is Endotype eliminative cleavage of L-alpha-rhamnopyranosyl-(1-&gt;4)-alpha-D-galactopyranosyluronic acid bonds of rhamnogalacturonan I domains in ramified hairy regions of pectin leaving L-rhamnopyranose at the reducing end and 4-deoxy-4,5-unsaturated D-galactopyranosyluronic acid at the non-reducing end.. Functionally, pectinolytic enzymes consist of four classes of enzymes: pectin lyase, polygalacturonase, pectin methylesterase and rhamnogalacturonase. Degrades the rhamnogalacturonan I (RG-I) backbone of pectin. The sequence is that of Probable rhamnogalacturonate lyase A (rglA) from Aspergillus terreus (strain NIH 2624 / FGSC A1156).